A 367-amino-acid polypeptide reads, in one-letter code: Glutamate 5-kinase (367 aa).

An ATP-binding site is contributed by lysine 10. The substrate site is built by serine 50, aspartate 137, and asparagine 149. ATP is bound by residues 169–170 (TD) and 211–217 (TGGMGTK). Residues 275–353 (AGEITVDAGA…QQIDAILGYE (79 aa)) form the PUA domain.

It belongs to the glutamate 5-kinase family.

The protein resides in the cytoplasm. It carries out the reaction L-glutamate + ATP = L-glutamyl 5-phosphate + ADP. It participates in amino-acid biosynthesis; L-proline biosynthesis; L-glutamate 5-semialdehyde from L-glutamate: step 1/2. In terms of biological role, catalyzes the transfer of a phosphate group to glutamate to form L-glutamate 5-phosphate. This is Glutamate 5-kinase from Klebsiella pneumoniae subsp. pneumoniae (strain ATCC 700721 / MGH 78578).